We begin with the raw amino-acid sequence, 346 residues long: MGVTELGKLIGKEARREVKLEALAGRCVALDAYNALYQFLASIRQPDGTPLMDRAGRITSHISGLFYRTINLMEAGIKPVYVFDGKPPEFKLAEIEERRKAKEKATEELVRAIKEGRRDEVAKYAKRAIFLTNEMVEDAKKLLTYMGVPWVQAPSEGEAQAAYMARRGHCWAVGSQDYDSLLFGSPRLVRNLATSPKRKVGDEVVELSPEIIELDAVLKSLRLRSREQLIDLAILLGTDYNPDGVPGIGPQRALKLIWEFGSLEKLLDTVLRGVTFPIDPVEIKRFFLNPPVTDTYTTDVTKPDDAKLRDFLVHEHDFGEERVERALERLKKAMGKLRTSALDSFF.

An N-domain region spans residues 1 to 102 (MGVTELGKLI…AEIEERRKAK (102 aa)). Aspartate 31, aspartate 84, glutamate 156, glutamate 158, aspartate 177, aspartate 179, and aspartate 239 together coordinate Mg(2+). The I-domain stretch occupies residues 120-261 (EVAKYAKRAI…RALKLIWEFG (142 aa)).

Belongs to the XPG/RAD2 endonuclease family. FEN1 subfamily. Interacts with PCNA. PCNA stimulates the nuclease activity without altering cleavage specificity. Requires Mg(2+) as cofactor.

Functionally, structure-specific nuclease with 5'-flap endonuclease and 5'-3' exonuclease activities involved in DNA replication and repair. During DNA replication, cleaves the 5'-overhanging flap structure that is generated by displacement synthesis when DNA polymerase encounters the 5'-end of a downstream Okazaki fragment. Binds the unpaired 3'-DNA end and kinks the DNA to facilitate 5' cleavage specificity. Cleaves one nucleotide into the double-stranded DNA from the junction in flap DNA, leaving a nick for ligation. Also involved in the base excision repair (BER) pathway. Acts as a genome stabilization factor that prevents flaps from equilibrating into structures that lead to duplications and deletions. Also possesses 5'-3' exonuclease activity on nicked or gapped double-stranded DNA. This chain is Flap endonuclease 1, found in Pyrobaculum arsenaticum (strain DSM 13514 / JCM 11321 / PZ6).